The following is a 298-amino-acid chain: MQLEKMITEGSNAASAEIDRVSTLEMCRIINDEDKTVPLAVERVLPDIAAAIDVIHTQVSGGGRLIYLGAGTSGRLGILDASECPPTYGVKPGLVVGLIAGGEYAIQHAVEGAEDSREGGVNDLKNIGLTAQDVVVGIAASGRTPYVIAGLEYARQLGCRTVGISCNPGSAVSSTAEFAITPVVGAEVVTGSSRMKAGTAQKLVLNMLSTGLMIKSGKVFGNLMVDVVATNEKLHVRQVNIVKNATGCNAEQAEAALIACERNCKTAIVMVLKNLDADEAKKCLDQHGGFIRKALEKE.

The region spanning 55–218 (IHTQVSGGGR…STGLMIKSGK (164 aa)) is the SIS domain. Glutamate 83 acts as the Proton donor in catalysis. Glutamate 114 is an active-site residue.

This sequence belongs to the GCKR-like family. MurNAc-6-P etherase subfamily. Homodimer.

The enzyme catalyses N-acetyl-D-muramate 6-phosphate + H2O = N-acetyl-D-glucosamine 6-phosphate + (R)-lactate. It participates in amino-sugar metabolism; 1,6-anhydro-N-acetylmuramate degradation. The protein operates within amino-sugar metabolism; N-acetylmuramate degradation. It functions in the pathway cell wall biogenesis; peptidoglycan recycling. Its function is as follows. Specifically catalyzes the cleavage of the D-lactyl ether substituent of MurNAc 6-phosphate, producing GlcNAc 6-phosphate and D-lactate. Together with AnmK, is also required for the utilization of anhydro-N-acetylmuramic acid (anhMurNAc) either imported from the medium or derived from its own cell wall murein, and thus plays a role in cell wall recycling. The chain is N-acetylmuramic acid 6-phosphate etherase from Escherichia coli O6:K15:H31 (strain 536 / UPEC).